A 403-amino-acid polypeptide reads, in one-letter code: Zinc metalloproteinase nas-8 (403 aa).

A signal peptide spans M1–A29. A propeptide spanning residues A30–R111 is cleaved from the precursor. Residues N112 to S307 enclose the Peptidase M12A domain. Cystine bridges form between C154–C306, C176–C195, C338–C372, C345–C365, and C352–C369. H203 serves as a coordination point for Zn(2+). E204 is a catalytic residue. Residues H207 and H213 each coordinate Zn(2+). Residues C338–C372 form the ShKT domain. A glycan (N-linked (GlcNAc...) asparagine) is linked at N386.

It depends on Zn(2+) as a cofactor.

It is found in the secreted. It catalyses the reaction Hydrolysis of peptide bonds in substrates containing five or more amino acids, preferentially with Ala in P1', and Pro in P2'.. Its function is as follows. Metalloprotease. The chain is Zinc metalloproteinase nas-8 (nas-8) from Caenorhabditis elegans.